Reading from the N-terminus, the 2183-residue chain is Genome polyprotein (2183 aa).

Glycine 2 is lipidated: N-myristoyl glycine; by host. Topologically, residues 2 to 1493 (GAQVSTQKTG…HVSRAFICLQ (1492 aa)) are cytoplasmic. An amphipathic alpha-helix region spans residues 566–582 (FYQGPTEESVERAMGRV). Catalysis depends on for protease 2A activity residues histidine 870 and aspartate 888. Zn(2+) is bound by residues cysteine 905 and cysteine 907. Cysteine 959 serves as the catalytic For protease 2A activity. Zn(2+)-binding residues include cysteine 965 and histidine 967. Residues 1099-1171 (NNNWLKKFTE…EQSAPSQSDQ (73 aa)) are membrane-binding. Residues 1099-1237 (NNNWLKKFTE…SPGAGKSVAT (139 aa)) form an oligomerization region. The tract at residues 1120-1124 (AVKIQ) is RNA-binding. An SF3 helicase domain is found at 1203–1359 (EKKMSNYIQF…SMYSQNGKIN (157 aa)). The Zn(2+) site is built by cysteine 1367, cysteine 1379, and cysteine 1384. The segment at 1367–1384 (CDEECCPVNFKKCCPLVC) adopts a C4-type; degenerate zinc-finger fold. An RNA-binding region spans residues 1411–1418 (EYNHRHSV). The oligomerization stretch occupies residues 1422–1427 (LEALFQ). The stretch at 1494–1509 (ALTTFVSVAGIIYIIY) is an intramembrane region. Residues 1510 to 2183 (KLFAGFQGAY…TLRRKWLDAF (674 aa)) lie on the Cytoplasmic side of the membrane. Tyrosine 1519 bears the O-(5'-phospho-RNA)-tyrosine mark. The 179-residue stretch at 1539–1717 (GPAFEFAVAM…FSASLLRHYF (179 aa)) folds into the Peptidase C3 domain. Active-site for protease 3C activity residues include histidine 1578, glutamate 1609, and cysteine 1685. Residues 1948–2064 (GHLRAFDYSG…SYPLPIDASL (117 aa)) enclose the RdRp catalytic domain. Residues aspartate 1954 and aspartate 2050 each coordinate Mg(2+).

The protein belongs to the picornaviruses polyprotein family. In terms of assembly, interacts with capsid protein VP1 and capsid protein VP3 to form heterotrimeric protomers. Interacts with capsid protein VP0, and capsid protein VP3 to form heterotrimeric protomers. Five protomers subsequently associate to form pentamers which serve as building blocks for the capsid. Interacts with capsid protein VP2, capsid protein VP3 and capsid protein VP4 following cleavage of capsid protein VP0. Interacts with host CXADR. As to quaternary structure, interacts with capsid protein VP1 and capsid protein VP3 in the mature capsid. In terms of assembly, interacts with capsid protein VP0 and capsid protein VP1 to form heterotrimeric protomers. Five protomers subsequently associate to form pentamers which serve as building blocks for the capsid. Interacts with capsid protein VP4 in the mature capsid. Interacts with protein 2C; this interaction may be important for virion morphogenesis. Interacts with capsid protein VP1 and capsid protein VP3. As to quaternary structure, homodimer. In terms of assembly, homohexamer; forms a hexameric ring structure with 6-fold symmetry characteristic of AAA+ ATPases. Interacts (via N-terminus) with host RTN3 (via reticulon domain); this interaction is important for viral replication. Interacts with capsid protein VP3; this interaction may be important for virion morphogenesis. Interacts with protein 3CD. As to quaternary structure, homodimer. Interacts with host GBF1. Interacts (via GOLD domain) with host ACBD3 (via GOLD domain); this interaction allows the formation of a viral protein 3A/ACBD3 heterotetramer with a 2:2 stoichiometry, which will stimulate the recruitment of host PI4KB in order to synthesize PI4P at the viral RNA replication sites. In terms of assembly, interacts with RNA-directed RNA polymerase. Interacts with protein 3AB and with RNA-directed RNA polymerase. As to quaternary structure, interacts with Viral protein genome-linked and with protein 3CD. It depends on Mg(2+) as a cofactor. Post-translationally, specific enzymatic cleavages in vivo by the viral proteases yield processing intermediates and the mature proteins. In terms of processing, myristoylation is required for the formation of pentamers during virus assembly. Further assembly of 12 pentamers and a molecule of genomic RNA generates the provirion. During virion maturation, immature virions are rendered infectious following cleavage of VP0 into VP4 and VP2. This maturation seems to be an autocatalytic event triggered by the presence of RNA in the capsid and it is followed by a conformational change infectious virion. Post-translationally, myristoylation is required during RNA encapsidation and formation of the mature virus particle. In terms of processing, VPg is uridylylated by the polymerase into VPg-pUpU. This acts as a nucleotide-peptide primer for the genomic RNA replication.

It is found in the virion. The protein localises to the host cytoplasm. It localises to the host cytoplasmic vesicle membrane. Its subcellular location is the host nucleus. It carries out the reaction a ribonucleoside 5'-triphosphate + H2O = a ribonucleoside 5'-diphosphate + phosphate + H(+). It catalyses the reaction Selective cleavage of Tyr-|-Gly bond in the picornavirus polyprotein.. The enzyme catalyses RNA(n) + a ribonucleoside 5'-triphosphate = RNA(n+1) + diphosphate. The catalysed reaction is Selective cleavage of Gln-|-Gly bond in the poliovirus polyprotein. In other picornavirus reactions Glu may be substituted for Gln, and Ser or Thr for Gly.. With respect to regulation, replication or transcription is subject to high level of random mutations by the nucleotide analog ribavirin. Its function is as follows. Forms an icosahedral capsid of pseudo T=3 symmetry with capsid proteins VP2 and VP3. The capsid is 300 Angstroms in diameter, composed of 60 copies of each capsid protein and enclosing the viral positive strand RNA genome. Capsid protein VP1 mainly forms the vertices of the capsid. Capsid protein VP1 interacts with host CXADR to provide virion attachment to target host cells. This attachment induces virion internalization. Tyrosine kinases are probably involved in the entry process. After binding to its receptor, the capsid undergoes conformational changes. Capsid protein VP1 N-terminus (that contains an amphipathic alpha-helix) and capsid protein VP4 are externalized. Together, they shape a pore in the host membrane through which viral genome is translocated to host cell cytoplasm. In terms of biological role, forms an icosahedral capsid of pseudo T=3 symmetry with capsid proteins VP2 and VP3. The capsid is 300 Angstroms in diameter, composed of 60 copies of each capsid protein and enclosing the viral positive strand RNA genome. Lies on the inner surface of the capsid shell. After binding to the host receptor, the capsid undergoes conformational changes. Capsid protein VP4 is released, Capsid protein VP1 N-terminus is externalized, and together, they shape a pore in the host membrane through which the viral genome is translocated into the host cell cytoplasm. Functionally, component of immature procapsids, which is cleaved into capsid proteins VP4 and VP2 after maturation. Allows the capsid to remain inactive before the maturation step. Its function is as follows. Cysteine protease that cleaves viral polyprotein and specific host proteins. It is responsible for the autocatalytic cleavage between the P1 and P2 regions, which is the first cleavage occurring in the polyprotein. Also cleaves the host translation initiation factor EIF4G1, in order to shut down the capped cellular mRNA translation. Inhibits the host nucleus-cytoplasm protein and RNA trafficking by cleaving host members of the nuclear pores. Counteracts stress granule formation probably by antagonizing its assembly or promoting its dissassembly. Cleaves and inhibits host IFIH1/MDA5, thereby inhibiting the type-I IFN production and the establishment of the antiviral state. Cleaves and inhibits host MAVS, thereby inhibiting the type-I IFN production and the establishment of the antiviral state. In terms of biological role, plays an essential role in the virus replication cycle by acting as a viroporin. Creates a pore in the host endoplasmic reticulum and as a consequence releases Ca2+ in the cytoplasm of infected cell. In turn, high levels of cytoplasmic calcium may trigger membrane trafficking and transport of viral ER-associated proteins to viroplasms, sites of viral genome replication. Induces and associates with structural rearrangements of intracellular membranes. Displays RNA-binding, nucleotide binding and NTPase activities. May play a role in virion morphogenesis and viral RNA encapsidation by interacting with the capsid protein VP3. Functionally, localizes the viral replication complex to the surface of membranous vesicles. Together with protein 3CD binds the Cis-Active RNA Element (CRE) which is involved in RNA synthesis initiation. Acts as a cofactor to stimulate the activity of 3D polymerase, maybe through a nucleid acid chaperone activity. Its function is as follows. Localizes the viral replication complex to the surface of membranous vesicles. It inhibits host cell endoplasmic reticulum-to-Golgi apparatus transport and causes the disassembly of the Golgi complex, possibly through GBF1 interaction. This would result in depletion of MHC, trail receptors and IFN receptors at the host cell surface. Plays an essential role in viral RNA replication by recruiting ACBD3 and PI4KB at the viral replication sites, thereby allowing the formation of the rearranged membranous structures where viral replication takes place. In terms of biological role, acts as a primer for viral RNA replication and remains covalently bound to viral genomic RNA. VPg is uridylylated prior to priming replication into VPg-pUpU. The oriI viral genomic sequence may act as a template for this. The VPg-pUpU is then used as primer on the genomic RNA poly(A) by the RNA-dependent RNA polymerase to replicate the viral genome. During genome replication, the VPg-RNA linkage is removed by the host TDP2, thereby accelerating replication. During the late stage of the replication cycle, host TDP2 is excluded from sites of viral RNA synthesis and encapsidation, allowing for the generation of progeny virions. Involved in the viral replication complex and viral polypeptide maturation. It exhibits protease activity with a specificity and catalytic efficiency that is different from protease 3C. Protein 3CD lacks polymerase activity. Protein 3CD binds to the 5'UTR of the viral genome. Functionally, replicates the viral genomic RNA on the surface of intracellular membranes. May form linear arrays of subunits that propagate along a strong head-to-tail interaction called interface-I. Covalently attaches UMP to a tyrosine of VPg, which is used to prime RNA synthesis. The positive stranded RNA genome is first replicated at virus induced membranous vesicles, creating a dsRNA genomic replication form. This dsRNA is then used as template to synthesize positive stranded RNA genomes. ss(+)RNA genomes are either translated, replicated or encapsidated. Its function is as follows. Major viral protease that mediates proteolytic processing of the polyprotein. Cleaves host EIF5B, contributing to host translation shutoff. Also cleaves host PABPC1, contributing to host translation shutoff. Cleaves host NLRP1, triggers host N-glycine-mediated degradation of the autoinhibitory NLRP1 N-terminal fragment. The sequence is that of Genome polyprotein from Coxsackievirus B4 (strain E2).